The sequence spans 235 residues: 7-cyano-7-deazaguanine synthase (235 aa).

Residue Phe13–Leu23 coordinates ATP. The Zn(2+) site is built by Cys197, Cys207, Cys210, and Cys213.

The protein belongs to the QueC family. Requires Zn(2+) as cofactor.

The catalysed reaction is 7-carboxy-7-deazaguanine + NH4(+) + ATP = 7-cyano-7-deazaguanine + ADP + phosphate + H2O + H(+). Its pathway is purine metabolism; 7-cyano-7-deazaguanine biosynthesis. In terms of biological role, catalyzes the ATP-dependent conversion of 7-carboxy-7-deazaguanine (CDG) to 7-cyano-7-deazaguanine (preQ(0)). The protein is 7-cyano-7-deazaguanine synthase of Solidesulfovibrio magneticus (strain ATCC 700980 / DSM 13731 / RS-1) (Desulfovibrio magneticus).